Reading from the N-terminus, the 258-residue chain is Acyl-[acyl-carrier-protein]--UDP-N-acetylglucosamine O-acyltransferase (258 aa).

It belongs to the transferase hexapeptide repeat family. LpxA subfamily. As to quaternary structure, homotrimer.

The protein localises to the cytoplasm. It carries out the reaction a (3R)-hydroxyacyl-[ACP] + UDP-N-acetyl-alpha-D-glucosamine = a UDP-3-O-[(3R)-3-hydroxyacyl]-N-acetyl-alpha-D-glucosamine + holo-[ACP]. Its pathway is glycolipid biosynthesis; lipid IV(A) biosynthesis; lipid IV(A) from (3R)-3-hydroxytetradecanoyl-[acyl-carrier-protein] and UDP-N-acetyl-alpha-D-glucosamine: step 1/6. Functionally, involved in the biosynthesis of lipid A, a phosphorylated glycolipid that anchors the lipopolysaccharide to the outer membrane of the cell. The polypeptide is Acyl-[acyl-carrier-protein]--UDP-N-acetylglucosamine O-acyltransferase (Pseudomonas fluorescens (strain Pf0-1)).